The primary structure comprises 944 residues: Isoleucine--tRNA ligase (944 aa).

A 'HIGH' region motif is present at residues 58–68 (PYANGDIHIGH). Glu-568 provides a ligand contact to L-isoleucyl-5'-AMP. The 'KMSKS' region signature appears at 609–613 (KMSKS). Lys-612 lines the ATP pocket. Positions 907, 910, 927, and 930 each coordinate Zn(2+).

It belongs to the class-I aminoacyl-tRNA synthetase family. IleS type 1 subfamily. In terms of assembly, monomer. The cofactor is Zn(2+).

It is found in the cytoplasm. It carries out the reaction tRNA(Ile) + L-isoleucine + ATP = L-isoleucyl-tRNA(Ile) + AMP + diphosphate. In terms of biological role, catalyzes the attachment of isoleucine to tRNA(Ile). As IleRS can inadvertently accommodate and process structurally similar amino acids such as valine, to avoid such errors it has two additional distinct tRNA(Ile)-dependent editing activities. One activity is designated as 'pretransfer' editing and involves the hydrolysis of activated Val-AMP. The other activity is designated 'posttransfer' editing and involves deacylation of mischarged Val-tRNA(Ile). The polypeptide is Isoleucine--tRNA ligase (Psychromonas ingrahamii (strain DSM 17664 / CCUG 51855 / 37)).